The chain runs to 357 residues: NAD-dependent protein deacetylase HST2 (357 aa).

S2 is subject to N-acetylserine. The Deacetylase sirtuin-type domain occupies 5-284; that stretch reads TASTEMSVRK…EQLVEELGWQ (280 aa). NAD(+) contacts are provided by residues 32–52 and 115–118; these read GAGI…TGLY and QNID. Residue H135 is the Proton acceptor of the active site. Zn(2+) is bound by residues C143, C146, C170, and C173. Residues 223 to 225, 248 to 250, and S270 contribute to the NAD(+) site; these read GTS and NLE. A compositionally biased stretch (basic and acidic residues) spans 317 to 329; that stretch reads LDQSEHESADKKD. Positions 317–357 are disordered; sequence LDQSEHESADKKDKKLQRLNGHDSDEDGASNSSSSQKAAKE. Residue S340 is modified to Phosphoserine.

Belongs to the sirtuin family. Class I subfamily. In terms of assembly, homotrimer. Monomer. Homotrimeric in its unliganded state. Undergoes a trimer-monomer transition upon acetyl-lysine substrate binding. Zn(2+) serves as cofactor.

The protein localises to the cytoplasm. Its subcellular location is the nucleus. The catalysed reaction is N(6)-acetyl-L-lysyl-[protein] + NAD(+) + H2O = 2''-O-acetyl-ADP-D-ribose + nicotinamide + L-lysyl-[protein]. Its activity is regulated as follows. Inhibited by ADP-ribose and nicotinamide. Functionally, NAD-dependent histone deacetylase that is involved in nuclear silencing events. Derepresses subtelomeric silencing and increases repression in nucleolar (rDNA) silencing. Its function is negatively regulated by active nuclear export. The chain is NAD-dependent protein deacetylase HST2 (HST2) from Saccharomyces cerevisiae (strain ATCC 204508 / S288c) (Baker's yeast).